Consider the following 514-residue polypeptide: GMP synthase [glutamine-hydrolyzing] (514 aa).

The Glutamine amidotransferase type-1 domain occupies Lys-7–Asn-197. Cys-84 acts as the Nucleophile in catalysis. Residues His-171 and Glu-173 contribute to the active site. Residues Trp-198–Arg-389 enclose the GMPS ATP-PPase domain. Ser-225–Ser-231 contacts ATP.

Homodimer.

The enzyme catalyses XMP + L-glutamine + ATP + H2O = GMP + L-glutamate + AMP + diphosphate + 2 H(+). It participates in purine metabolism; GMP biosynthesis; GMP from XMP (L-Gln route): step 1/1. Its function is as follows. Catalyzes the synthesis of GMP from XMP. This is GMP synthase [glutamine-hydrolyzing] from Brachyspira hyodysenteriae (strain ATCC 49526 / WA1).